The sequence spans 71 residues: Small ribosomal subunit protein bS18 (71 aa).

Belongs to the bacterial ribosomal protein bS18 family. As to quaternary structure, part of the 30S ribosomal subunit. Forms a tight heterodimer with protein bS6.

Its function is as follows. Binds as a heterodimer with protein bS6 to the central domain of the 16S rRNA, where it helps stabilize the platform of the 30S subunit. This is Small ribosomal subunit protein bS18 from Acaryochloris marina (strain MBIC 11017).